The sequence spans 127 residues: LFFYPLDFTFVCPTEIIAFSDRAEEFHQLGCEVLGVSVDXQXTHLAWINTPRKEGGLGPLKIPLLADVTRNLSLDYGVLKEDEGIAYRGLFIIDGKGVLRQITVNDLPVGRXVDEALRLVQGXQYTD.

In terms of domain architecture, Thioredoxin spans 1–125; sequence LFFYPLDFTF…ALRLVQGXQY (125 aa). Residue Cys12 is the Cysteine sulfenic acid (-SOH) intermediate of the active site. Ser73 is subject to Phosphoserine.

This sequence belongs to the peroxiredoxin family. AhpC/Prx1 subfamily. As to quaternary structure, homodimer; disulfide-linked, upon oxidation. 5 homodimers assemble to form a ring-like decamer. Interacts with TIPIN. In terms of processing, the enzyme can be inactivated by further oxidation of the cysteine sulfenic acid (C(P)-SOH) to sulphinic acid (C(P)-SO2H) instead of its condensation to a disulfide bond. It can be reactivated by forming a transient disulfide bond with sulfiredoxin SRXN1, which reduces the cysteine sulfinic acid in an ATP- and Mg-dependent manner. Post-translationally, acetylation increases resistance to transition to high molecular-mass complexes. Deacetylated by HDAC6 which decreases reducing activity.

Its subcellular location is the cytoplasm. The catalysed reaction is a hydroperoxide + [thioredoxin]-dithiol = an alcohol + [thioredoxin]-disulfide + H2O. In terms of biological role, thiol-specific peroxidase that catalyzes the reduction of hydrogen peroxide and organic hydroperoxides to water and alcohols, respectively. Plays a role in cell protection against oxidative stress by detoxifying peroxides and as sensor of hydrogen peroxide-mediated signaling events. Might participate in the signaling cascades of growth factors and tumor necrosis factor-alpha by regulating the intracellular concentrations of H(2)O(2). The polypeptide is Peroxiredoxin-2 (PRDX2) (Sus scrofa (Pig)).